Reading from the N-terminus, the 196-residue chain is Beta-crystallin A4 (196 aa).

T2 bears the N-acetylthreonine mark. The interval 2 to 11 (TLQCTKSAGH) is N-terminal arm. 2 consecutive Beta/gamma crystallin 'Greek key' domains span residues 12 to 51 (WRVV…KVLS) and 52 to 98 (GAWV…RPVA). Residues 99–104 (CANHRD) are connecting peptide. Beta/gamma crystallin 'Greek key' domains are found at residues 105 to 146 (SRLT…HVQS) and 147 to 195 (GAWV…RRIQ).

As to quaternary structure, homo/heterodimer, or complexes of higher-order. The structure of beta-crystallin oligomers seems to be stabilized through interactions between the N-terminal arms.

Its function is as follows. Crystallins are the dominant structural components of the vertebrate eye lens. This chain is Beta-crystallin A4 (Cryba4), found in Rattus norvegicus (Rat).